The following is an 85-amino-acid chain: Large ribosomal subunit protein bL27 (85 aa).

Positions 1–20 (MATKKAGGSTRNGRDSEAKR) are disordered.

Belongs to the bacterial ribosomal protein bL27 family.

The sequence is that of Large ribosomal subunit protein bL27 from Glaesserella parasuis serovar 5 (strain SH0165) (Haemophilus parasuis).